The following is a 269-amino-acid chain: Formamidopyrimidine-DNA glycosylase (269 aa).

Residue Pro2 is the Schiff-base intermediate with DNA of the active site. Glu3 serves as the catalytic Proton donor. The active-site Proton donor; for beta-elimination activity is Lys57. 3 residues coordinate DNA: His90, Arg109, and Lys150. An FPG-type zinc finger spans residues 235–269; sequence QVYGRKGEPCRVCGTPIVATKHAQRATFYCRQCQK. Arg259 functions as the Proton donor; for delta-elimination activity in the catalytic mechanism.

Belongs to the FPG family. As to quaternary structure, monomer. Requires Zn(2+) as cofactor.

It carries out the reaction Hydrolysis of DNA containing ring-opened 7-methylguanine residues, releasing 2,6-diamino-4-hydroxy-5-(N-methyl)formamidopyrimidine.. It catalyses the reaction 2'-deoxyribonucleotide-(2'-deoxyribose 5'-phosphate)-2'-deoxyribonucleotide-DNA = a 3'-end 2'-deoxyribonucleotide-(2,3-dehydro-2,3-deoxyribose 5'-phosphate)-DNA + a 5'-end 5'-phospho-2'-deoxyribonucleoside-DNA + H(+). Functionally, involved in base excision repair of DNA damaged by oxidation or by mutagenic agents. Acts as a DNA glycosylase that recognizes and removes damaged bases. Has a preference for oxidized purines, such as 7,8-dihydro-8-oxoguanine (8-oxoG). Has AP (apurinic/apyrimidinic) lyase activity and introduces nicks in the DNA strand. Cleaves the DNA backbone by beta-delta elimination to generate a single-strand break at the site of the removed base with both 3'- and 5'-phosphates. The chain is Formamidopyrimidine-DNA glycosylase from Escherichia coli (strain 55989 / EAEC).